Consider the following 197-residue polypeptide: Protein shisa-4 (197 aa).

Residues 1-27 (MPPAGPRGTAPLAAVVLLVLGAPLALA) form the signal peptide. The Extracellular segment spans residues 28 to 87 (SEDCLWYLDRNGSWHPGFDCEFFTFCCGTCYQRYCCRDLTLLITERQQKHCLAFSPKTIA). A helical transmembrane segment spans residues 88–108 (GIASAVILFVAVVATTICCFL). The Cytoplasmic portion of the chain corresponds to 109–197 (CSCCYLYRRR…MPPQPSYPGA (89 aa)).

Belongs to the shisa family.

It localises to the membrane. The protein is Protein shisa-4 (Shisa4) of Mus musculus (Mouse).